Here is a 189-residue protein sequence, read N- to C-terminus: DKQLDADVSPKPTIFLPSIAETKLQKAGTYLCLLEKFFPDIIKIHWQEKKSNTILGSQEGNTMKTNDTYMKFSWLTVPEESLDKEHRCIVRHENNKNGIDQEIIFPPIKTDVTTVDPKYNYSKDANDVITMDPKDNWSKDANDTLLLQLTNTSAYYTYLLLLLKSVVYFAIITCCLLRRTAFCCNGEKS.

The 95-residue stretch at 10 to 104 (PKPTIFLPSI…NKNGIDQEII (95 aa)) folds into the Ig-like domain. The cysteines at positions 32 and 88 are disulfide-linked. N-linked (GlcNAc...) asparagine glycans are attached at residues asparagine 66, asparagine 120, asparagine 136, asparagine 142, and asparagine 151. The chain crosses the membrane as a helical span at residues 155 to 177 (YYTYLLLLLKSVVYFAIITCCLL).

As to quaternary structure, gamma-delta TR is a heterodimer composed of a gamma and delta chain; disulfide-linked. The gamma-delta TR is associated with the transmembrane signaling CD3 coreceptor proteins following the stoichiometry: a single gamma-delta TR heterodimer associates with one CD3D-CD3E heterodimer, one CD3G-CD3E heterodimer and one CD247 homodimer forming a stable octameric structure. Upon activation, gamma-delta TR complex associates with FCER1G to initiate intracellular signaling.

The protein localises to the cell membrane. In terms of biological role, constant region of T cell receptor (TR) gamma chain that participates in the antigen recognition. Gamma-delta TRs recognize a variety of self and foreign non-peptide antigens frequently expressed at the epithelial boundaries between the host and external environment, including endogenous lipids presented by MH-like protein CD1D and phosphoantigens presented by butyrophilin-like molecule BTN3A1. Upon antigen recognition induces rapid, innate-like immune responses involved in pathogen clearance and tissue repair. Binding of gamma-delta TR complex to antigen triggers phosphorylation of immunoreceptor tyrosine-based activation motifs (ITAMs) in the CD3 chains by the LCK and FYN kinases, allowing the recruitment, phosphorylation, and activation of ZAP70 that facilitates phosphorylation of the scaffolding proteins LCP2 and LAT. This lead to the formation of a supramolecular signalosome that recruits the phospholipase PLCG1, resulting in calcium mobilization and ERK activation, ultimately leading to T cell expansion and differentiation into effector cells. Gamma-delta TRs are produced through somatic rearrangement of a limited repertoire of variable (V), diversity (D), and joining (J) genes. The potential diversity of gamma-delta TRs is conferred by the unique ability to rearrange (D) genes in tandem and to utilize all three reading frames. The combinatorial diversity is considerably increased by the sequence exonuclease trimming and random nucleotide (N) region additions which occur during the V-(D)-J rearrangements. This Homo sapiens (Human) protein is T cell receptor gamma constant 2.